The primary structure comprises 451 residues: Phosphoglucosamine mutase (451 aa).

The active-site Phosphoserine intermediate is the Ser101. Mg(2+) contacts are provided by Ser101, Asp240, Asp242, and Asp244. The residue at position 101 (Ser101) is a Phosphoserine.

Belongs to the phosphohexose mutase family. Requires Mg(2+) as cofactor. Post-translationally, activated by phosphorylation.

The enzyme catalyses alpha-D-glucosamine 1-phosphate = D-glucosamine 6-phosphate. Its function is as follows. Catalyzes the conversion of glucosamine-6-phosphate to glucosamine-1-phosphate. This chain is Phosphoglucosamine mutase, found in Alkalilimnicola ehrlichii (strain ATCC BAA-1101 / DSM 17681 / MLHE-1).